Here is a 446-residue protein sequence, read N- to C-terminus: RUN domain-containing protein 3A (446 aa).

Positions 1 to 298 (MEASFVQTTM…LQLQLEEAAA (298 aa)) are interaction with RAP2A. Positions 52 to 189 (DDSSEEFVNF…IDFSFCLKGE (138 aa)) constitute an RUN domain. Thr-215 is subject to Phosphothreonine. Residues 216–239 (DEEERHSAESSTSEDNSPEHPYLP) are disordered. A Phosphoserine modification is found at Ser-232. A coiled-coil region spans residues 267 to 322 (YLEELVRLRESQLKDLEAENRRLQLQLEEAAAQNQREKRELEGVILELQEQLTGLI). Over residues 372–384 (PLSAEASLSSDSQ) the composition is skewed to polar residues. Residues 372–403 (PLSAEASLSSDSQRLGEAKRDEEPWGPIGKDP) form a disordered region. The span at 385–394 (RLGEAKRDEE) shows a compositional bias: basic and acidic residues. Phosphoserine occurs at positions 416 and 419.

This sequence belongs to the RUNDC3 family. As to quaternary structure, interacts with the GTP-bound form of RAP2A. As to expression, brain.

May act as an effector of RAP2A in neuronal cells. This is RUN domain-containing protein 3A (Rundc3a) from Mus musculus (Mouse).